The sequence spans 296 residues: 33 kDa chaperonin (296 aa).

2 disulfides stabilise this stretch: Cys-233-Cys-235 and Cys-267-Cys-270.

It belongs to the HSP33 family. Post-translationally, under oxidizing conditions two disulfide bonds are formed involving the reactive cysteines. Under reducing conditions zinc is bound to the reactive cysteines and the protein is inactive.

It localises to the cytoplasm. Its function is as follows. Redox regulated molecular chaperone. Protects both thermally unfolding and oxidatively damaged proteins from irreversible aggregation. Plays an important role in the bacterial defense system toward oxidative stress. The chain is 33 kDa chaperonin from Actinobacillus pleuropneumoniae serotype 3 (strain JL03).